The following is a 209-amino-acid chain: NAD(P)H-quinone oxidoreductase subunit I (209 aa).

4Fe-4S ferredoxin-type domains lie at 55-84 and 95-124; these read GRIHFEYDKCIACEVCVRVCPINLPVVDWE and KHYSIDFGVCIFCGNCVEYCPSNCLSMTEE. The [4Fe-4S] cluster site is built by Cys64, Cys67, Cys70, Cys74, Cys104, Cys107, Cys110, and Cys114.

It belongs to the complex I 23 kDa subunit family. As to quaternary structure, NDH-1 is composed of at least 11 different subunits. Requires [4Fe-4S] cluster as cofactor.

The protein localises to the cellular thylakoid membrane. It carries out the reaction a plastoquinone + NADH + (n+1) H(+)(in) = a plastoquinol + NAD(+) + n H(+)(out). The catalysed reaction is a plastoquinone + NADPH + (n+1) H(+)(in) = a plastoquinol + NADP(+) + n H(+)(out). NDH-1 shuttles electrons from an unknown electron donor, via FMN and iron-sulfur (Fe-S) centers, to quinones in the respiratory and/or the photosynthetic chain. The immediate electron acceptor for the enzyme in this species is believed to be plastoquinone. Couples the redox reaction to proton translocation, and thus conserves the redox energy in a proton gradient. The sequence is that of NAD(P)H-quinone oxidoreductase subunit I from Trichodesmium erythraeum (strain IMS101).